The following is a 2971-amino-acid chain: Reticulocyte-binding protein homolog 1 (2971 aa).

A signal peptide spans 1–20; it reads MQRWIFCNIVLHILIYLAEF. Topologically, residues 21–2897 are extracellular; it reads SHEQESYSSN…KKQKNGNHER (2877 aa). Positions 30-50 are disordered; the sequence is NEKIRKDYSDDNNYEPTPSYE. 7 N-linked (GlcNAc...) asparagine glycosylation sites follow: N70, N78, N87, N135, N286, N384, and N417. The interval 500 to 833 is erythrocyte binding domain (EBD); that stretch reads LQIVQQKLLE…MQQGYNNLTN (334 aa). LRR repeat units lie at residues 528-553 and 607-633; these read YKNIHDEILNKKNNEITKIIINNIKD and LNNLHTLKQVQNNKIKYEEHIKQILQK. N685 carries N-linked (GlcNAc...) asparagine glycosylation. 2 LRR repeats span residues 736-758 and 785-808; these read IDTISKYILKQKDIELTQHVYTD and QETLKQITHIVNNIKTIKKDLLKE. Residues N830, N892, N1000, and N1010 are each glycosylated (N-linked (GlcNAc...) asparagine). LRR repeat units lie at residues 993 to 1018 and 1356 to 1381; these read LKILKILNISLKACEKNNKSINTLND and LRNINLQEIKNNIIKIFKEFKSAHKE. N1425 carries an N-linked (GlcNAc...) asparagine glycan. One copy of the LRR 7 repeat lies at 1466 to 1489; it reads AKYMENIDTYKNNIEIISKQINPE. A glycan (N-linked (GlcNAc...) asparagine) is linked at N1496. LRR repeat units follow at residues 1512–1537, 1586–1609, and 1611–1636; these read YKQINNIIINSNQLKNEAFTIDELQN, SQNINHVSIYTEQLHNLYIKLEEE, and EQMKTLYHKSNVLHNQINFNEDAFIN. 5 N-linked (GlcNAc...) asparagine glycosylation sites follow: N1664, N1692, N1718, N1816, and N1844. LRR repeat units follow at residues 1700 to 1723 and 1809 to 1834; these read LQELKQVQENVEKVKDIYNQTIKY and LKLFVDINSTNNNLDNMLSEINSIQN. Residues 1880–1903 form an LRR 13 repeat; that stretch reads QNEIRNMNLEKNFMLDKSKKIDEE. N-linked (GlcNAc...) asparagine glycosylation is found at N1913 and N1918. An LRR 14 repeat occupies 1944-1967; that stretch reads KENIEKIKQEINTLSDVFKKPFFF. N-linked (GlcNAc...) asparagine glycans are attached at residues N2054, N2207, N2289, N2300, N2338, and N2405. An LRR 15 repeat occupies 2523 to 2548; sequence IKDIDNVFIKIQNNKFEQIQKYIEII. N-linked (GlcNAc...) asparagine glycosylation is found at N2598 and N2752. An LRR 16 repeat occupies 2731-2754; sequence ENIFDNIQLKKKDIDDIIININNT. 2 stretches are compositionally biased toward basic and acidic residues: residues 2773-2782 and 2795-2804; these read KVDEKSEINN and QKNKIKDHNL. 2 disordered regions span residues 2773–2825 and 2840–2862; these read KVDE…MKEQ and HHVHNHNHNHNQNQKDSTKLQEQ. N-linked (GlcNAc...) asparagine glycosylation is present at N2811. Over residues 2814–2825 the composition is skewed to basic and acidic residues; sequence EESHQNEQMKEQ. Residues 2898–2918 form a helical membrane-spanning segment; sequence MYFASGIVVSILFLSSLGFVI. Residues 2919–2971 lie on the Cytoplasmic side of the membrane; sequence NSKNNKQEYDKEQEKQQQNDFVCDNNKMDDKSTQKYGRNQEEVMEISFDNDYI.

May in part interact with AMA1 in the moving tight junction between the parasite and the erythrocyte membranes; the interaction may facilitate junction formation and active invasion. Proteolytically processed into multiple fragments following schizont rupture. In the mature schizont stage prior to merozoite release, full length RH1 is processed post-Golgi into a 240 kDa N-terminal form and a 120 kDa C-terminal form containing the transmembrane region. Both forms appear not to form a complex. However, they appear to remain in close proximity in late schizonts. Following merozoite invasion of host erythrocytes, the 240 kDa form is further processed into a 140 kDa form which may be involved in the disengagement of the ligand-receptor complex required during the invasion process. Also, the 120 kDa is further cleaved into a 110 kDa form and a transmembrane 9 kDa form probably by ROM4.

It localises to the cell membrane. The protein localises to the secreted. It is found in the cell junction. The protein resides in the tight junction. Its subcellular location is the cytoplasmic vesicle. It localises to the secretory vesicle. The protein localises to the rhoptry. Its function is as follows. During the asexual blood stage, binds to a sialic acid containing receptor on the surface of the host erythrocyte and thus is involved in merozoite invasion. Binds erythrocytes via a neuraminidase sensitive and trypsin-, chymotrypsin-resistant receptor. After merozoite attachment and reorientation, RH1 binding to its erythrocyte receptor triggers an increase in intracellular Ca(2+) within the parasite resulting in the release of microneme proteins such as EBA175 which in turn leads to the formation of the tight junction between parasite and host cell. This Plasmodium falciparum (isolate 3D7) protein is Reticulocyte-binding protein homolog 1.